The sequence spans 253 residues: Protein C1orf43 homolog (253 aa).

Residues 11 to 31 (VNVVLVMAYGSLVFVLLFIFV) form a helical membrane-spanning segment. Residues 194–213 (SGSSQRQHQSAAKDLTQSPE) are disordered.

The protein resides in the membrane. The protein localises to the golgi apparatus. It localises to the mitochondrion. Its function is as follows. General regulator of phagocytosis. Required to uptake Gram negative bacterium by macrophages. The sequence is that of Protein C1orf43 homolog from Bos taurus (Bovine).